Here is a 156-residue protein sequence, read N- to C-terminus: Ribosomal RNA large subunit methyltransferase H (156 aa).

S-adenosyl-L-methionine-binding positions include leucine 73, glycine 104, and 123–128 (LSSLTL).

It belongs to the RNA methyltransferase RlmH family. As to quaternary structure, homodimer.

The protein localises to the cytoplasm. The catalysed reaction is pseudouridine(1915) in 23S rRNA + S-adenosyl-L-methionine = N(3)-methylpseudouridine(1915) in 23S rRNA + S-adenosyl-L-homocysteine + H(+). Specifically methylates the pseudouridine at position 1915 (m3Psi1915) in 23S rRNA. The chain is Ribosomal RNA large subunit methyltransferase H from Ralstonia pickettii (strain 12J).